Here is a 231-residue protein sequence, read N- to C-terminus: LexA repressor (231 aa).

Residues 26 to 46 (FDEMKLALDLRSKSGIHRLIT) constitute a DNA-binding region (H-T-H motif). Residues 79-98 (VGFQPRVIDGDRPDRPRPAN) form a disordered region. Basic and acidic residues predominate over residues 86 to 95 (IDGDRPDRPR). Catalysis depends on for autocatalytic cleavage activity residues Ser-152 and Lys-190.

It belongs to the peptidase S24 family. As to quaternary structure, homodimer.

The enzyme catalyses Hydrolysis of Ala-|-Gly bond in repressor LexA.. Its function is as follows. Represses a number of genes involved in the response to DNA damage (SOS response), including recA and lexA. In the presence of single-stranded DNA, RecA interacts with LexA causing an autocatalytic cleavage which disrupts the DNA-binding part of LexA, leading to derepression of the SOS regulon and eventually DNA repair. The chain is LexA repressor from Ruegeria pomeroyi (strain ATCC 700808 / DSM 15171 / DSS-3) (Silicibacter pomeroyi).